The primary structure comprises 390 residues: 8-amino-7-oxononanoate synthase (390 aa).

Position 19 (Arg19) interacts with substrate. 106 to 107 (GY) contacts pyridoxal 5'-phosphate. His131 contributes to the substrate binding site. Residues Ser176, His204, and Thr233 each contribute to the pyridoxal 5'-phosphate site. Lys236 bears the N6-(pyridoxal phosphate)lysine mark. Position 350 (Thr350) interacts with substrate.

Belongs to the class-II pyridoxal-phosphate-dependent aminotransferase family. BioF subfamily. In terms of assembly, homodimer. The cofactor is pyridoxal 5'-phosphate.

It carries out the reaction 6-carboxyhexanoyl-[ACP] + L-alanine + H(+) = (8S)-8-amino-7-oxononanoate + holo-[ACP] + CO2. It functions in the pathway cofactor biosynthesis; biotin biosynthesis. Catalyzes the decarboxylative condensation of pimeloyl-[acyl-carrier protein] and L-alanine to produce 8-amino-7-oxononanoate (AON), [acyl-carrier protein], and carbon dioxide. In Pseudomonas putida (strain GB-1), this protein is 8-amino-7-oxononanoate synthase.